Reading from the N-terminus, the 1574-residue chain is Synaptojanin-1 (1574 aa).

In terms of domain architecture, SAC spans 119–442 (VRKVLNSGNF…GDSISKIYAG (324 aa)). The catalytic stretch occupies residues 500–899 (GSLRVSEQTL…GPPDGTVLVS (400 aa)). Residues Ser-820 and Ser-830 each carry the phosphoserine modification. The 78-residue stretch at 894–971 (GTVLVSIKSS…RTITITLKSP (78 aa)) folds into the RRM domain. Low complexity predominate over residues 1029–1054 (HLQPSSSSGLGTSPSSSPRTSPCQSP). The tract at residues 1029-1327 (HLQPSSSSGL…GVKQEPTLKS (299 aa)) is disordered. At Ser-1053 the chain carries Phosphoserine. The segment covering 1090–1100 (PAAQKESSQTI) has biased composition (polar residues). Pro residues predominate over residues 1105–1127 (PPPPRPVAPPARPAPPQRPPPPS). Ser-1147 and Ser-1175 each carry phosphoserine. Arg-1198 bears the Omega-N-methylarginine mark. Phosphothreonine is present on Thr-1217. The span at 1287 to 1310 (SRSSQSLPSDSSPQLQQEQPTGQQ) shows a compositional bias: low complexity. Ser-1289 and Ser-1350 each carry phosphoserine. Thr-1354 carries the phosphothreonine modification. 2 disordered regions span residues 1382–1519 (TMPP…SFDD) and 1532–1574 (LPAR…FTER). The segment covering 1389–1413 (QSKSQESVGSSANPFPSLPTRNPFT) has biased composition (polar residues). A run of 3 repeats spans residues 1401–1403 (NPF), 1410–1412 (NPF), and 1421–1423 (NPF). The interval 1401-1423 (NPFPSLPTRNPFTDRTAAPGNPF) is 3 X 3 AA repeats of N-P-F. Polar residues-rich tracts occupy residues 1424 to 1436 (RVQSQESEATSWL) and 1472 to 1484 (DLQSQSTVKTSNP). Positions 1535–1548 (RRPPPPPPPVPLLP) are enriched in pro residues. A compositionally biased stretch (low complexity) spans 1549–1563 (PGTTSSAGPSTTLSS). Ser-1566 carries the phosphoserine modification.

It belongs to the synaptojanin family. The protein in the central section; belongs to the inositol 1,4,5-trisphosphate 5-phosphatase family. As to quaternary structure, interacts with ASH/GRB2. Interacts with PACSIN1, PACSIN2 and PACSIN3. Interacts with AMPH, SH3GL1, SH3GL2 and SH3GL3. Interacts with MYO1E (via SH3 domain). Interacts with BIN1 and DNM1. Interacts with EPS15. In terms of tissue distribution, found in neonatal brain, and in a wide variety of adult non-neuronal tissues. Concentrated at clathrin-coated endocytic intermediates in nerve terminals. Also detected in the lung and heart. Expressed at higher levels than isoform 2 in the testis and liver and is not detected in the skeletal muscle. Expressed predominantly in the neurons, but is also found in all other tissues at much lower levels. Also detected in the lung and heart. Epressed at lower levels than isoform 1 in the testis and liver and is not detected in the skeletal muscle. As to expression, expressed in the brain.

The protein resides in the membrane. The protein localises to the cytoplasm. It localises to the perinuclear region. It catalyses the reaction a 1,2-diacyl-sn-glycero-3-phospho-(1D-myo-inositol-4,5-bisphosphate) + H2O = a 1,2-diacyl-sn-glycero-3-phospho-(1D-myo-inositol 4-phosphate) + phosphate. Its function is as follows. Phosphatase that acts on various phosphoinositides, including phosphatidylinositol 4-phosphate, phosphatidylinositol (4,5)-bisphosphate and phosphatidylinositol (3,4,5)-trisphosphate. Has a role in clathrin-mediated endocytosis. Hydrolyzes PIP2 bound to actin regulatory proteins resulting in the rearrangement of actin filaments downstream of tyrosine kinase and ASH/GRB2. The chain is Synaptojanin-1 (Synj1) from Rattus norvegicus (Rat).